A 379-amino-acid chain; its full sequence is Tryptophan 2,3-dioxygenase (379 aa).

Substrate-binding positions include Phe57–His61 and Arg128. Residue His312 coordinates heme. A substrate-binding site is contributed by Thr327.

The protein belongs to the tryptophan 2,3-dioxygenase family. As to quaternary structure, homotetramer. Dimer of dimers. Heme serves as cofactor.

It catalyses the reaction L-tryptophan + O2 = N-formyl-L-kynurenine. It functions in the pathway amino-acid degradation; L-tryptophan degradation via kynurenine pathway; L-kynurenine from L-tryptophan: step 1/2. The protein operates within pigment biosynthesis; ommochrome biosynthesis. In terms of biological role, heme-dependent dioxygenase that catalyzes the oxidative cleavage of the L-tryptophan (L-Trp) pyrrole ring and converts L-tryptophan to N-formyl-L-kynurenine. Catalyzes the oxidative cleavage of the indole moiety. The protein is Tryptophan 2,3-dioxygenase of Drosophila sechellia (Fruit fly).